We begin with the raw amino-acid sequence, 274 residues long: uncharacterized protein (274 aa).

This is an uncharacterized protein from Acidianus hospitalis (AFV-1).